A 248-amino-acid polypeptide reads, in one-letter code: Adenosylcobinamide-GDP ribazoletransferase (248 aa).

6 helical membrane passes run phenylalanine 36 to leucine 56, phenylalanine 59 to glycine 79, glycine 114 to leucine 134, tyrosine 137 to leucine 157, isoleucine 170 to leucine 190, and alanine 199 to leucine 219.

Belongs to the CobS family. Mg(2+) is required as a cofactor.

Its subcellular location is the cell membrane. It carries out the reaction alpha-ribazole + adenosylcob(III)inamide-GDP = adenosylcob(III)alamin + GMP + H(+). The catalysed reaction is alpha-ribazole 5'-phosphate + adenosylcob(III)inamide-GDP = adenosylcob(III)alamin 5'-phosphate + GMP + H(+). The protein operates within cofactor biosynthesis; adenosylcobalamin biosynthesis; adenosylcobalamin from cob(II)yrinate a,c-diamide: step 7/7. Joins adenosylcobinamide-GDP and alpha-ribazole to generate adenosylcobalamin (Ado-cobalamin). Also synthesizes adenosylcobalamin 5'-phosphate from adenosylcobinamide-GDP and alpha-ribazole 5'-phosphate. This Clostridium botulinum (strain Langeland / NCTC 10281 / Type F) protein is Adenosylcobinamide-GDP ribazoletransferase.